The sequence spans 87 residues: Small ribosomal subunit protein bS18 (87 aa).

It belongs to the bacterial ribosomal protein bS18 family. Part of the 30S ribosomal subunit. Forms a tight heterodimer with protein bS6.

Functionally, binds as a heterodimer with protein bS6 to the central domain of the 16S rRNA, where it helps stabilize the platform of the 30S subunit. The sequence is that of Small ribosomal subunit protein bS18 from Sulfurimonas denitrificans (strain ATCC 33889 / DSM 1251) (Thiomicrospira denitrificans (strain ATCC 33889 / DSM 1251)).